The chain runs to 331 residues: Phosphate acyltransferase (331 aa).

It belongs to the PlsX family. Homodimer. Probably interacts with PlsY.

Its subcellular location is the cytoplasm. The enzyme catalyses a fatty acyl-[ACP] + phosphate = an acyl phosphate + holo-[ACP]. Its pathway is lipid metabolism; phospholipid metabolism. Catalyzes the reversible formation of acyl-phosphate (acyl-PO(4)) from acyl-[acyl-carrier-protein] (acyl-ACP). This enzyme utilizes acyl-ACP as fatty acyl donor, but not acyl-CoA. This chain is Phosphate acyltransferase, found in Malacoplasma penetrans (strain HF-2) (Mycoplasma penetrans).